A 750-amino-acid chain; its full sequence is Photosystem I P700 chlorophyll a apoprotein A1 (750 aa).

The next 8 membrane-spanning stretches (helical) occupy residues 70-93, 156-179, 195-219, 291-309, 346-369, 385-411, 433-455, and 531-549; these read VFSA…FHGA, LYCT…FHYH, LNHH…HVSL, IAHH…GHMY, WHAQ…HHMY, LSLF…IFMV, AIIS…LYIH, and FLVH…LILL. Cys-573 and Cys-582 together coordinate [4Fe-4S] cluster. 2 helical membrane-spanning segments follow: residues 589–610 and 664–686; these read HVFL…HFSW and LSAY…MFLF. His-675 is a binding site for chlorophyll a'. The chlorophyll a site is built by Met-683 and Tyr-691. Residue Trp-692 coordinates phylloquinone. The chain crosses the membrane as a helical span at residues 724–744; that stretch reads AVGVTHYLLGGIATTWAFFLA.

Belongs to the PsaA/PsaB family. As to quaternary structure, the PsaA/B heterodimer binds the P700 chlorophyll special pair and subsequent electron acceptors. PSI consists of a core antenna complex that captures photons, and an electron transfer chain that converts photonic excitation into a charge separation. The eukaryotic PSI reaction center is composed of at least 11 subunits. The cofactor is P700 is a chlorophyll a/chlorophyll a' dimer, A0 is one or more chlorophyll a, A1 is one or both phylloquinones and FX is a shared 4Fe-4S iron-sulfur center..

It localises to the plastid. The protein resides in the chloroplast thylakoid membrane. It catalyses the reaction reduced [plastocyanin] + hnu + oxidized [2Fe-2S]-[ferredoxin] = oxidized [plastocyanin] + reduced [2Fe-2S]-[ferredoxin]. In terms of biological role, psaA and PsaB bind P700, the primary electron donor of photosystem I (PSI), as well as the electron acceptors A0, A1 and FX. PSI is a plastocyanin-ferredoxin oxidoreductase, converting photonic excitation into a charge separation, which transfers an electron from the donor P700 chlorophyll pair to the spectroscopically characterized acceptors A0, A1, FX, FA and FB in turn. Oxidized P700 is reduced on the lumenal side of the thylakoid membrane by plastocyanin. This is Photosystem I P700 chlorophyll a apoprotein A1 from Daucus carota (Wild carrot).